The sequence spans 146 residues: MEYSYIPSAALYNNADIFQFFPRNKRLNSHQKSRLDEHARKMAAFMMERQEEYRYYENLANQEQFSDDNGMESGFCSGATSTGQSASTSPAPVQLIPNPFFDPEYVAAKTQSPVKLVTNPFFNPELVEEIKKKSQKRNEKSAPVSA.

The tract at residues 67 to 93 (DDNGMESGFCSGATSTGQSASTSPAPV) is disordered. A compositionally biased stretch (low complexity) spans 77–92 (SGATSTGQSASTSPAP).

This is an uncharacterized protein from Caenorhabditis elegans.